The primary structure comprises 347 residues: Protein RecA (347 aa).

Gly64 to Thr71 contributes to the ATP binding site.

Belongs to the RecA family.

Its subcellular location is the cytoplasm. Can catalyze the hydrolysis of ATP in the presence of single-stranded DNA, the ATP-dependent uptake of single-stranded DNA by duplex DNA, and the ATP-dependent hybridization of homologous single-stranded DNAs. It interacts with LexA causing its activation and leading to its autocatalytic cleavage. This Bartonella henselae (strain ATCC 49882 / DSM 28221 / CCUG 30454 / Houston 1) (Rochalimaea henselae) protein is Protein RecA.